The primary structure comprises 129 residues: NADPH-dependent 7-cyano-7-deazaguanine reductase (129 aa).

Cysteine 34 functions as the Thioimide intermediate in the catalytic mechanism. The active-site Proton donor is aspartate 41. Substrate is bound by residues 56-58 (VEL) and 75-76 (HE).

It belongs to the GTP cyclohydrolase I family. QueF type 1 subfamily.

Its subcellular location is the cytoplasm. The catalysed reaction is 7-aminomethyl-7-carbaguanine + 2 NADP(+) = 7-cyano-7-deazaguanine + 2 NADPH + 3 H(+). Its pathway is tRNA modification; tRNA-queuosine biosynthesis. In terms of biological role, catalyzes the NADPH-dependent reduction of 7-cyano-7-deazaguanine (preQ0) to 7-aminomethyl-7-deazaguanine (preQ1). The polypeptide is NADPH-dependent 7-cyano-7-deazaguanine reductase (Thioalkalivibrio sulfidiphilus (strain HL-EbGR7)).